The primary structure comprises 529 residues: Corneodesmosin (529 aa).

Positions 1 to 32 (MGSSRAPWMGRVGGHGMMALLLAGLLLPGTLA) are cleaved as a signal peptide. Disordered regions lie at residues 38 to 248 (FSDP…SVSG) and 383 to 492 (GSTG…SSAG). Composition is skewed to low complexity over residues 58–83 (GKGDSSGFSSYSGSSSSGSSISSARS), 90–100 (GSSSGSSIAQG), 111–175 (GYSQ…NGSA), 189–231 (PSQP…SGGP), 392–408 (SPSSSRVPSSSSISSSS), and 426–441 (PGTGSFSSSSSSQSSG). Asparagine 172 carries an N-linked (GlcNAc...) asparagine glycan. The span at 449 to 467 (GSKSSSSGHPCMSVSSLTL) shows a compositional bias: polar residues.

In terms of tissue distribution, exclusively expressed in skin.

The protein resides in the secreted. Important for the epidermal barrier integrity. In Homo sapiens (Human), this protein is Corneodesmosin (CDSN).